The sequence spans 307 residues: Bifunctional protein FolD (307 aa).

NADP(+) contacts are provided by residues 170–172 (GRS), serine 195, and isoleucine 236.

Belongs to the tetrahydrofolate dehydrogenase/cyclohydrolase family. As to quaternary structure, homodimer.

The enzyme catalyses (6R)-5,10-methylene-5,6,7,8-tetrahydrofolate + NADP(+) = (6R)-5,10-methenyltetrahydrofolate + NADPH. It carries out the reaction (6R)-5,10-methenyltetrahydrofolate + H2O = (6R)-10-formyltetrahydrofolate + H(+). The protein operates within one-carbon metabolism; tetrahydrofolate interconversion. In terms of biological role, catalyzes the oxidation of 5,10-methylenetetrahydrofolate to 5,10-methenyltetrahydrofolate and then the hydrolysis of 5,10-methenyltetrahydrofolate to 10-formyltetrahydrofolate. The protein is Bifunctional protein FolD of Sinorhizobium fredii (strain NBRC 101917 / NGR234).